The following is a 462-amino-acid chain: ATP synthase subunit beta 1 (462 aa).

An ATP-binding site is contributed by G152–T159.

Belongs to the ATPase alpha/beta chains family. As to quaternary structure, F-type ATPases have 2 components, CF(1) - the catalytic core - and CF(0) - the membrane proton channel. CF(1) has five subunits: alpha(3), beta(3), gamma(1), delta(1), epsilon(1). CF(0) has four main subunits: a(1), b(1), b'(1) and c(9-12).

It is found in the cell inner membrane. The enzyme catalyses ATP + H2O + 4 H(+)(in) = ADP + phosphate + 5 H(+)(out). Produces ATP from ADP in the presence of a proton gradient across the membrane. The catalytic sites are hosted primarily by the beta subunits. The sequence is that of ATP synthase subunit beta 1 from Dinoroseobacter shibae (strain DSM 16493 / NCIMB 14021 / DFL 12).